The sequence spans 380 residues: Pregnancy-associated glycoprotein 4 (380 aa).

The N-terminal stretch at 1–15 (MKWLVLLGLVAFSEC) is a signal peptide. The propeptide at 16 to 53 (IFKIPLRRVKTMRKTLSGKNMLNDVLKEHPYRLPQISF) is activation peptide. The Peptidase A1 domain maps to 71 to 377 (YVGNITIGTP…DRGNDRIGLA (307 aa)). An N-linked (GlcNAc...) asparagine glycan is attached at Asn74. Asp89 is a catalytic residue. Cys102 and Cys107 are disulfide-bonded. A glycan (N-linked (GlcNAc...) asparagine) is linked at Asn125. Cys261 and Cys265 are disulfide-bonded. Asp270 is an active-site residue. Cysteines 303 and 337 form a disulfide.

The protein belongs to the peptidase A1 family. Trophoblast and placental tissue. Produced specifically in the invasive binucleate cells of the placenta.

It localises to the secreted. Its subcellular location is the extracellular space. The sequence is that of Pregnancy-associated glycoprotein 4 from Ovis aries (Sheep).